A 903-amino-acid polypeptide reads, in one-letter code: Translation initiation factor IF-2 (903 aa).

The disordered stretch occupies residues 66 to 296 (QATLKGEGPV…GRSRKREMEN (231 aa)). The segment covering 121 to 132 (NTDETRVQEHKP) has biased composition (basic and acidic residues). Composition is skewed to low complexity over residues 139–152 (AGDA…AAAG) and 178–195 (AATG…GQQS). The segment covering 204-231 (EGRSRQDENKGSAREDQANRFATRDKEA) has biased composition (basic and acidic residues). Residues 246-255 (RRPAHSKPLR) show a composition bias toward basic residues. 2 stretches are compositionally biased toward basic and acidic residues: residues 263-276 (VTKD…DRSN) and 285-296 (ESGRSRKREMEN). In terms of domain architecture, tr-type G spans 403–572 (ERPPVVTVMG…LLTADVAELK (170 aa)). The segment at 412 to 419 (GHVDHGKT) is G1. Residue 412 to 419 (GHVDHGKT) coordinates GTP. The G2 stretch occupies residues 437-441 (GITQH). The tract at residues 458–461 (DTPG) is G3. GTP contacts are provided by residues 458-462 (DTPGH) and 512-515 (NKID). The interval 512–515 (NKID) is G4. The tract at residues 548–550 (SAV) is G5.

The protein belongs to the TRAFAC class translation factor GTPase superfamily. Classic translation factor GTPase family. IF-2 subfamily.

The protein localises to the cytoplasm. One of the essential components for the initiation of protein synthesis. Protects formylmethionyl-tRNA from spontaneous hydrolysis and promotes its binding to the 30S ribosomal subunits. Also involved in the hydrolysis of GTP during the formation of the 70S ribosomal complex. This chain is Translation initiation factor IF-2, found in Moorella thermoacetica (strain ATCC 39073 / JCM 9320).